A 919-amino-acid polypeptide reads, in one-letter code: Glutamate receptor ionotropic, kainate 3 (919 aa).

Residues 1–31 (MTAPWRRLRSLVWEYWAGFLVCAFWIPDSRG) form the signal peptide. Residues 32–563 (MPHVIRIGGI…VFSFLNPLSP (532 aa)) are Extracellular-facing. 7 N-linked (GlcNAc...) asparagine glycosylation sites follow: N70, N76, N278, N381, N415, N426, and N433. Cysteines 99 and 350 form a disulfide. Residues P518, T520, and R525 each contribute to the L-glutamate site. 2 N-linked (GlcNAc...) asparagine glycosylation sites follow: N548 and N551. A helical transmembrane segment spans residues 564 to 584 (DIWMYVLLAYLGVSCVLFVIA). Residues 585–636 (RFSPYEWYDAHPCNPGSEVVENNFTLLNSFWFGMGSLMQQGSELMPKALSTR) lie on the Cytoplasmic side of the membrane. The chain crosses the membrane as a helical span at residues 637–657 (IIGGIWWFFTLIIISSYTANL). The Extracellular segment spans residues 658–820 (AAFLTVERME…KEASALGIQK (163 aa)). Positions 691, 692, and 739 each coordinate L-glutamate. The N-linked (GlcNAc...) asparagine glycan is linked to N752. The chain crosses the membrane as a helical span at residues 821–841 (IGGIFIVLAAGLVLSVLVAVG). Over 842–919 (EFIYKLRKTA…CSTSLAPVFP (78 aa)) the chain is Cytoplasmic. At S869 the chain carries Phosphoserine. K887 participates in a covalent cross-link: Glycyl lysine isopeptide (Lys-Gly) (interchain with G-Cter in SUMO1).

This sequence belongs to the glutamate-gated ion channel (TC 1.A.10.1) family. GRIK3 subfamily. Homotetramer, and heterotetramer with GRIK4 or GRIK5. Can form functional heteromeric receptors with GRIK2. Interacts with PRKCABP. Interacts with NETO2. As to quaternary structure, homomeric GluR7A forms functional kainate receptors which have very low sensitivity to glutamate. Can form functional heteromeric receptors with GRIK4 and GRIK5. In terms of assembly, homomeric GluR7B forms functional kainate receptors. Post-translationally, mass spectrometry data suggest the protein is N-glycosylated at five distinct sites. Expressed in the olfactory bulb (at protein level). Expressed in the deep cortical layers, dentate gyrus, reticular thalamic nucleus, mammillary bodies, pons, and cerebellum of the adult.

The protein resides in the cell membrane. It localises to the postsynaptic cell membrane. It catalyses the reaction Ca(2+)(in) = Ca(2+)(out). In terms of biological role, ionotropic glutamate receptor that functions as a cation-permeable ligand-gated ion channel, gated by L-glutamate and the glutamatergic agonist kainic acid. Binding of the excitatory neurotransmitter L-glutamate induces a conformation change, leading to the opening of the cation channel, and thereby converts the chemical signal to an electrical impulse. The receptor then desensitizes rapidly and enters a transient inactive state, characterized by the presence of bound agonist. In association with GRIK2, involved in presynaptic facilitation of glutamate release at hippocampal mossy fiber synapses. Functionally, ionotropic glutamate receptor that functions as a ligand-gated cation channel, gated by L-glutamate and the glutamatergic agonist kainic acid. This is Glutamate receptor ionotropic, kainate 3 (Grik3) from Rattus norvegicus (Rat).